Consider the following 270-residue polypeptide: uncharacterized protein (270 aa).

Residues 43 to 112 enclose the J domain; sequence CTANDIKRKY…REEYDRFGIH (70 aa). The interval 239–270 is disordered; that stretch reads EQSKQIPTQQKPSSLPPPERALPAPTMPTPSS. Polar residues predominate over residues 242-251; sequence KQIPTQQKPS. Over residues 252–270 the composition is skewed to pro residues; sequence SLPPPERALPAPTMPTPSS.

This is an uncharacterized protein from Schizosaccharomyces pombe (strain 972 / ATCC 24843) (Fission yeast).